A 568-amino-acid chain; its full sequence is Sulfite reductase [NADPH] hemoprotein beta-component (568 aa).

Cys425, Cys431, Cys470, and Cys474 together coordinate [4Fe-4S] cluster. Residue Cys474 coordinates siroheme.

The protein belongs to the nitrite and sulfite reductase 4Fe-4S domain family. Alpha(8)-beta(8). The alpha component is a flavoprotein, the beta component is a hemoprotein. Siroheme is required as a cofactor. The cofactor is [4Fe-4S] cluster.

The enzyme catalyses hydrogen sulfide + 3 NADP(+) + 3 H2O = sulfite + 3 NADPH + 4 H(+). The protein operates within sulfur metabolism; hydrogen sulfide biosynthesis; hydrogen sulfide from sulfite (NADPH route): step 1/1. Component of the sulfite reductase complex that catalyzes the 6-electron reduction of sulfite to sulfide. This is one of several activities required for the biosynthesis of L-cysteine from sulfate. This chain is Sulfite reductase [NADPH] hemoprotein beta-component, found in Xanthomonas oryzae pv. oryzae (strain MAFF 311018).